The following is a 312-amino-acid chain: Plasminogen activator (312 aa).

A signal peptide spans 1 to 20 (MKKSSIVATIITILSGSANA). Residues 21–31 (ASSQLIPNISP) are Periplasmic-facing. Residues 32–40 (DSFTVAAST) form a beta stranded membrane-spanning segment. At 41–70 (GMLSGKSHEMLYDAETGRKISQLDWKIKNV) the chain is on the extracellular side. A beta stranded membrane pass occupies residues 71 to 80 (AILKGDISWD). Residues 81–84 (PYSF) lie on the Periplasmic side of the membrane. Residues 85-94 (LTLNARGWTS) form a beta stranded membrane-spanning segment. Over 95–131 (LASGSGNMDDYDWMNENQSEWTDHSSHPATNVNHANE) the chain is Extracellular. Active-site residues include Asp-104 and Asp-106. Residues 132–140 (YDLNVKGWL) form a beta stranded membrane-spanning segment. Topologically, residues 141-145 (LQDEN) are periplasmic. The beta stranded transmembrane segment at 146–154 (YKAGITAGY) threads the bilayer. Topologically, residues 155–194 (QETRFSWTATGGSYSYNNGAYTGNFPKGVRVIGYNQRFSM) are extracellular. Residues 195–204 (PYIGLAGQYR) form a beta stranded membrane-spanning segment. The Periplasmic portion of the chain corresponds to 205–207 (IND). The chain crosses the membrane as a beta stranded span at residues 208 to 216 (FELNALFKF). Residues 217–244 (SDWVRAHDNDEHYMRDLTFREKTSGSRY) lie on the Extracellular side of the membrane. Catalysis depends on residues Asp-226 and His-228. The beta stranded transmembrane segment at 245-255 (YGTVINAGYYV) threads the bilayer. The Periplasmic segment spans residues 256–258 (TPN). The beta stranded transmembrane segment at 259–267 (AKVFAEFTY) threads the bilayer. At 268–301 (SKYDEGKGGTQTIDKNSGDSVSIGGDAAGISNKN) the chain is on the extracellular side. A beta stranded transmembrane segment spans residues 302 to 312 (YTVTAGLQYRF).

The protein belongs to the peptidase A26 family.

It is found in the cell outer membrane. The catalysed reaction is Converts human Glu-plasminogen to plasmin by cleaving the 560-Arg-|-Val-561 peptide bond that is also hydrolyzed by the mammalian u-plasminogen activator and t-plasminogen activator. Also cleaves arginyl bonds in other proteins.. Its activity is regulated as follows. Requires bacterial lipopolysaccharide (LPS) for activation; addition of LPS to inactive protein reactivates it. In the absence of LPS the active site groove is slightly narrower, and peptide substrate binds deep within the active site groove, displacing the nucleophilic water molecule. In terms of biological role, in the mammalian host activates (cleaves) plasminogen to generate the serine protease plasmin. Plasmin degrades fibrin clots (fibrinolysis) and facilitates bacterial cell migration, enabling rapid dissemination of bacteria from the initial site of infection. Cleaves host plasminogen to generate plasmin and probably also has autocatalytic activity. Fibrinolytic activity prevails at 37 degrees Celsius whereas coagulase expression predominates at lower temperatures (28 degrees Celsius). Cleaves plasminogen; plasminogen cleavage is much higher than coagulase activity. In Yersinia pestis, this protein is Plasminogen activator.